The primary structure comprises 150 residues: Large ribosomal subunit protein bL9 (150 aa).

It belongs to the bacterial ribosomal protein bL9 family.

Its function is as follows. Binds to the 23S rRNA. This chain is Large ribosomal subunit protein bL9, found in Arthrobacter sp. (strain FB24).